An 834-amino-acid chain; its full sequence is Periplasmic nitrate reductase (834 aa).

Positions 1–29 (MNLTRREFAKANAAAIAAAAAGLPILVRA) form a signal peptide, tat-type signal. A 4Fe-4S Mo/W bis-MGD-type domain is found at 41-97 (LVWNKAPCRFCGTGCSVMVATRDGQVVATHGDIKAEVNRGINCVKGYFLSKIMYGSD). [4Fe-4S] cluster contacts are provided by Cys-48, Cys-51, Cys-55, and Cys-83. Mo-bis(molybdopterin guanine dinucleotide) is bound by residues Lys-85, Gln-152, Asn-177, Cys-181, 214-221 (WGSNMAEM), 245-249 (STFEH), 264-266 (QTD), Met-375, Gln-379, Asn-485, 511-512 (SD), Lys-534, Asp-561, and 721-730 (TGRVLEHWHT). Phe-797 contacts substrate. Positions 805 and 822 each coordinate Mo-bis(molybdopterin guanine dinucleotide).

Belongs to the prokaryotic molybdopterin-containing oxidoreductase family. NasA/NapA/NarB subfamily. As to quaternary structure, component of the periplasmic nitrate reductase NapAB complex composed of NapA and NapB. Requires [4Fe-4S] cluster as cofactor. It depends on Mo-bis(molybdopterin guanine dinucleotide) as a cofactor. Predicted to be exported by the Tat system. The position of the signal peptide cleavage has not been experimentally proven.

It is found in the periplasm. It catalyses the reaction 2 Fe(II)-[cytochrome] + nitrate + 2 H(+) = 2 Fe(III)-[cytochrome] + nitrite + H2O. Functionally, catalytic subunit of the periplasmic nitrate reductase complex NapAB. Receives electrons from NapB and catalyzes the reduction of nitrate to nitrite. This chain is Periplasmic nitrate reductase, found in Pseudomonas aeruginosa (strain UCBPP-PA14).